The sequence spans 862 residues: Linoleate 9S-lipoxygenase 1 (862 aa).

A PLAT domain is found at 34–161 (NDFGATIIDG…NYRYSRVFFA (128 aa)). In terms of domain architecture, Lipoxygenase spans 164-862 (TYLPSQMPAA…AKGIPNSISI (699 aa)). The interval 212 to 241 (GRPILGGNSDHPYPRRGRTERKPNASDPSL) is disordered. Fe cation is bound by residues H517, H522, H708, N712, and I862.

It belongs to the lipoxygenase family. In terms of assembly, monomer. The cofactor is Fe cation.

It carries out the reaction (9Z,12Z)-octadecadienoate + O2 = (9S)-hydroperoxy-(10E,12Z)-octadecadienoate. It participates in lipid metabolism; oxylipin biosynthesis. In terms of biological role, plant lipoxygenase may be involved in a number of diverse aspects of plant physiology including growth and development, pest resistance, and senescence or responses to wounding. It catalyzes the hydroperoxidation of lipids containing a cis,cis-1,4-pentadiene structure. This is Linoleate 9S-lipoxygenase 1 (LOX1.1) from Hordeum vulgare (Barley).